A 717-amino-acid chain; its full sequence is Probable E3 ubiquitin-protein ligase WAVH2 (717 aa).

Composition is skewed to polar residues over residues 13-28 and 85-94; these read VSSN…SLHT and RTTSNATPRT. Positions 13 to 120 are disordered; the sequence is VSSNQDKPQQ…SSSSSSSQGG (108 aa). The span at 95 to 117 shows a compositional bias: low complexity; it reads SNSSSPKFFSNPSSPKSSSSSSS. The RING-type; atypical zinc finger occupies 140 to 184; the sequence is CAICLQRVNSNQSNSTAAIFTAECSHSFHLSCVNGLEDKRCPFCS. The VWFA domain occupies 326-456; sequence DLVTVLDLSN…LNATRIPFVV (131 aa).

In terms of tissue distribution, expressed in root tips, cotyledons, leaf primordia and hypocotyls.

It carries out the reaction S-ubiquitinyl-[E2 ubiquitin-conjugating enzyme]-L-cysteine + [acceptor protein]-L-lysine = [E2 ubiquitin-conjugating enzyme]-L-cysteine + N(6)-ubiquitinyl-[acceptor protein]-L-lysine.. In terms of biological role, probable E3 ubiquitin-protein ligase involved in the regulation of root growth. Acts as a positive regulator of root gravitropism. In Arabidopsis thaliana (Mouse-ear cress), this protein is Probable E3 ubiquitin-protein ligase WAVH2.